Here is a 309-residue protein sequence, read N- to C-terminus: MPIRVPDELPAVNFLREENVFVMTTSRASGQEIRPLKVLILNLMPKKIETENQFLRLLSNSPLQVDIQLLRIDSRESRNTPAEHLNNFYCNFEDIQEQNFDGLIVTGAPLGLVEFNDVAYWPQIKQVLEWSKDHVTSTLFVCWAVQAALNILYGIPKQTRTDKLSGVYEHHILHPHALLTRGFDDSFLAPHSRYADFPAALIRDYTDLEILAETEEGDAYLFASKDKRIAFVTGHPEYDAQTLAQEYFRDVEAGLDPDVPYNYFPHNDPQNTPRASWRSHGNLLFTNWLNYYVYQITPYDLRHMNPTLD.

Cys142 (acyl-thioester intermediate) is an active-site residue. Substrate contacts are provided by Lys163 and Ser192. The active-site Proton acceptor is His235. The active site involves Glu237. Residue Arg249 coordinates substrate.

Belongs to the MetA family. In terms of assembly, homodimer.

Its subcellular location is the cytoplasm. The catalysed reaction is L-homoserine + succinyl-CoA = O-succinyl-L-homoserine + CoA. It participates in amino-acid biosynthesis; L-methionine biosynthesis via de novo pathway; O-succinyl-L-homoserine from L-homoserine: step 1/1. In terms of biological role, transfers a succinyl group from succinyl-CoA to L-homoserine, forming succinyl-L-homoserine. This chain is Homoserine O-succinyltransferase, found in Escherichia coli O127:H6 (strain E2348/69 / EPEC).